The chain runs to 576 residues: Nuclear protein localization protein 4 homolog (576 aa).

Disordered stretches follow at residues 67–96 (LHLVGNNNNNNNDNKASSGSNNNNNNNNIS) and 200–219 (QDDNEEDNKDNKDNSEIKKS). A compositionally biased stretch (low complexity) spans 72–94 (NNNNNNNDNKASSGSNNNNNNNN). Basic and acidic residues predominate over residues 208–218 (KDNKDNSEIKK). The region spanning 295–430 (GALVDFQSAN…MEAFQVSDQA (136 aa)) is the MPN domain.

Belongs to the NPL4 family.

It functions in the pathway protein degradation; proteasomal ubiquitin-dependent pathway. In terms of biological role, may be part of a complex that binds ubiquitinated proteins and that is necessary for the export of misfolded proteins from the ER to the cytoplasm, where they are degraded by the proteasome. The chain is Nuclear protein localization protein 4 homolog (nploc4) from Dictyostelium discoideum (Social amoeba).